The following is a 315-amino-acid chain: Homoserine O-succinyltransferase (315 aa).

C142 serves as the catalytic Acyl-thioester intermediate. Substrate-binding residues include K163 and S192. H235 functions as the Proton acceptor in the catalytic mechanism. E237 is a catalytic residue. R249 lines the substrate pocket.

Belongs to the MetA family.

Its subcellular location is the cytoplasm. It catalyses the reaction L-homoserine + succinyl-CoA = O-succinyl-L-homoserine + CoA. Its pathway is amino-acid biosynthesis; L-methionine biosynthesis via de novo pathway; O-succinyl-L-homoserine from L-homoserine: step 1/1. Transfers a succinyl group from succinyl-CoA to L-homoserine, forming succinyl-L-homoserine. In Shewanella piezotolerans (strain WP3 / JCM 13877), this protein is Homoserine O-succinyltransferase.